Here is a 926-residue protein sequence, read N- to C-terminus: DNA mismatch repair protein MutS (926 aa).

Positions 16-40 are disordered; that stretch reads VASTPTRRGRPPGSSAARASNGAGS. Positions 26-40 are enriched in low complexity; sequence PPGSSAARASNGAGS. Position 658-665 (658-665) interacts with ATP; the sequence is GPNMAGKS.

Belongs to the DNA mismatch repair MutS family.

In terms of biological role, this protein is involved in the repair of mismatches in DNA. It is possible that it carries out the mismatch recognition step. This protein has a weak ATPase activity. This chain is DNA mismatch repair protein MutS, found in Granulibacter bethesdensis (strain ATCC BAA-1260 / CGDNIH1).